A 397-amino-acid polypeptide reads, in one-letter code: Putative F-box protein At1g26510 (397 aa).

Positions methionine 1–lysine 23 are disordered. The F-box domain occupies glutamine 24–serine 71.

The sequence is that of Putative F-box protein At1g26510 from Arabidopsis thaliana (Mouse-ear cress).